The following is a 261-amino-acid chain: Arcelin-5A (261 aa).

A signal peptide spans 1–21 (MASSKLLSLALFLVLLTHANS). N-linked (GlcNAc...) asparagine glycans are attached at residues asparagine 43, asparagine 91, and asparagine 100. The cysteines at positions 167 and 203 are disulfide-linked. Positions 255–261 (ILLNNIL) are excised as a propeptide.

This sequence belongs to the leguminous lectin family. In terms of assembly, monomer. In terms of processing, the C-terminal segment appears to be highly susceptible to proteolysis.

In terms of biological role, seed storage. This carbohydrate-binding lectin has toxic effects on bean bruchid pests. This chain is Arcelin-5A (ARC5A), found in Phaseolus vulgaris (Kidney bean).